A 416-amino-acid polypeptide reads, in one-letter code: F-box/FBD/LRR-repeat protein At1g13570 (416 aa).

The region spanning proline 5–lysine 53 is the F-box domain. LRR repeat units lie at residues valine 115–histidine 142, glutamine 164–tyrosine 189, methionine 203–methionine 229, phenylalanine 238–isoleucine 263, and cysteine 294–alanine 321. Residues leucine 346–serine 384 enclose the FBD domain.

The protein is F-box/FBD/LRR-repeat protein At1g13570 of Arabidopsis thaliana (Mouse-ear cress).